We begin with the raw amino-acid sequence, 153 residues long: Arginine repressor (153 aa).

The protein belongs to the ArgR family.

The protein localises to the cytoplasm. The protein operates within amino-acid biosynthesis; L-arginine biosynthesis [regulation]. In terms of biological role, regulates arginine biosynthesis genes. The polypeptide is Arginine repressor (Glaesserella parasuis serovar 5 (strain SH0165) (Haemophilus parasuis)).